The sequence spans 428 residues: Serine--tRNA ligase (428 aa).

235 to 237 is a binding site for L-serine; sequence TAE. Position 266 to 268 (266 to 268) interacts with ATP; that stretch reads RSE. E289 provides a ligand contact to L-serine. 353-356 lines the ATP pocket; sequence EISS. L-serine is bound at residue S389.

The protein belongs to the class-II aminoacyl-tRNA synthetase family. Type-1 seryl-tRNA synthetase subfamily. Homodimer. The tRNA molecule binds across the dimer.

The protein localises to the cytoplasm. It catalyses the reaction tRNA(Ser) + L-serine + ATP = L-seryl-tRNA(Ser) + AMP + diphosphate + H(+). The catalysed reaction is tRNA(Sec) + L-serine + ATP = L-seryl-tRNA(Sec) + AMP + diphosphate + H(+). The protein operates within aminoacyl-tRNA biosynthesis; selenocysteinyl-tRNA(Sec) biosynthesis; L-seryl-tRNA(Sec) from L-serine and tRNA(Sec): step 1/1. Catalyzes the attachment of serine to tRNA(Ser). Is also able to aminoacylate tRNA(Sec) with serine, to form the misacylated tRNA L-seryl-tRNA(Sec), which will be further converted into selenocysteinyl-tRNA(Sec). In Psychromonas ingrahamii (strain DSM 17664 / CCUG 51855 / 37), this protein is Serine--tRNA ligase.